The chain runs to 282 residues: Phosphate import ATP-binding protein PstB (282 aa).

Residues 36–277 (IEVKNLNFFY…PARKETEDYI (242 aa)) form the ABC transporter domain. Position 68 to 75 (68 to 75 (GPSGCGKS)) interacts with ATP.

Belongs to the ABC transporter superfamily. Phosphate importer (TC 3.A.1.7) family. The complex is composed of two ATP-binding proteins (PstB), two transmembrane proteins (PstC and PstA) and a solute-binding protein (PstS).

The protein resides in the cell inner membrane. It carries out the reaction phosphate(out) + ATP + H2O = ADP + 2 phosphate(in) + H(+). Part of the ABC transporter complex PstSACB involved in phosphate import. Responsible for energy coupling to the transport system. The polypeptide is Phosphate import ATP-binding protein PstB (Burkholderia pseudomallei (strain 1710b)).